The following is a 195-amino-acid chain: Coiled-coil domain-containing protein 184 (195 aa).

A coiled-coil region spans residues 39–68 (GMKELMEHLKAQLQALFEDVRAMRGALDEQ). A disordered region spans residues 98 to 175 (RQGGLGVVGN…AGLLGGDGPL (78 aa)). Positions 135–146 (PEDEEDDDEEEK) are enriched in acidic residues.

The polypeptide is Coiled-coil domain-containing protein 184 (CCDC184) (Bos taurus (Bovine)).